The primary structure comprises 196 residues: MTLEKIIEKLAAKSSILISPITVKENLAYKVEPNFLLPFLKALKESEELRFTVLTDLFGSDFPEKAKRFEVVYNLLSLKLNKRLIIKTYVSEHESIPSAMSIFNATCWYEREVYDMFGINFDGNDDKRRILTDYEFEGHPLRKDFPLTGYTQVKYDEQTKKVAYEPVNLDIEYREFDFSSPWHSPTYTLPGDEKAK.

Belongs to the complex I 30 kDa subunit family. As to quaternary structure, NDH-1 is composed of 14 different subunits. Subunits NuoB, C, D, E, F, and G constitute the peripheral sector of the complex.

The protein localises to the cell inner membrane. It carries out the reaction a quinone + NADH + 5 H(+)(in) = a quinol + NAD(+) + 4 H(+)(out). Functionally, NDH-1 shuttles electrons from NADH, via FMN and iron-sulfur (Fe-S) centers, to quinones in the respiratory chain. The immediate electron acceptor for the enzyme in this species is believed to be ubiquinone. Couples the redox reaction to proton translocation (for every two electrons transferred, four hydrogen ions are translocated across the cytoplasmic membrane), and thus conserves the redox energy in a proton gradient. This chain is NADH-quinone oxidoreductase subunit C, found in Rickettsia bellii (strain RML369-C).